Reading from the N-terminus, the 175-residue chain is Ribulose bisphosphate carboxylase small subunit, chloroplastic 2 (175 aa).

The N-terminal 46 residues, 1 to 46 (MAPAVMASSATTVAPFQGLKSTAGLPISCRSGSTGLSSVSNGGRIR), are a transit peptide targeting the chloroplast.

Belongs to the RuBisCO small chain family. As to quaternary structure, heterohexadecamer of 8 large and 8 small subunits.

The protein resides in the plastid. The protein localises to the chloroplast. Its function is as follows. RuBisCO catalyzes two reactions: the carboxylation of D-ribulose 1,5-bisphosphate, the primary event in carbon dioxide fixation, as well as the oxidative fragmentation of the pentose substrate. Both reactions occur simultaneously and in competition at the same active site. Although the small subunit is not catalytic it is essential for maximal activity. In Triticum aestivum (Wheat), this protein is Ribulose bisphosphate carboxylase small subunit, chloroplastic 2.